A 292-amino-acid chain; its full sequence is Transcription antiterminator LacT (292 aa).

2 PRD domains span residues 66-170 (NIPI…DDGE) and 172-284 (VFGK…APAQ).

This sequence belongs to the transcriptional antiterminator BglG family.

Functionally, mediates positive regulation of the lac operon by functioning as an antiterminator factor of transcription. This chain is Transcription antiterminator LacT (lacT), found in Lacticaseibacillus casei (Lactobacillus casei).